The following is a 26-amino-acid chain: AMP deaminase 1 (26 aa).

Belongs to the metallo-dependent hydrolases superfamily. Adenosine and AMP deaminases family. Homotetramer. Requires Zn(2+) as cofactor.

The catalysed reaction is AMP + H2O + H(+) = IMP + NH4(+). The protein operates within purine metabolism; IMP biosynthesis via salvage pathway; IMP from AMP: step 1/1. Its function is as follows. AMP deaminase plays a critical role in energy metabolism. This is AMP deaminase 1 (AMPD1) from Oryctolagus cuniculus (Rabbit).